The sequence spans 256 residues: Phosphatidylglycerol--prolipoprotein diacylglyceryl transferase (256 aa).

3 helical membrane passes run 19 to 39 (VHWYGLMYLIGFIGAWLLGYW), 56 to 76 (LIFYSALGVILGGRVGYMLFY), and 91 to 111 (IWEGGMSFHGGLLGVVIAAWL). Arginine 139 serves as a coordination point for a 1,2-diacyl-sn-glycero-3-phospho-(1'-sn-glycerol). A helical membrane pass occupies residues 231–251 (FGWLTMGQVLSIPMLLIGIWL).

Belongs to the Lgt family.

The protein localises to the cell inner membrane. The enzyme catalyses L-cysteinyl-[prolipoprotein] + a 1,2-diacyl-sn-glycero-3-phospho-(1'-sn-glycerol) = an S-1,2-diacyl-sn-glyceryl-L-cysteinyl-[prolipoprotein] + sn-glycerol 1-phosphate + H(+). Its pathway is protein modification; lipoprotein biosynthesis (diacylglyceryl transfer). Its function is as follows. Catalyzes the transfer of the diacylglyceryl group from phosphatidylglycerol to the sulfhydryl group of the N-terminal cysteine of a prolipoprotein, the first step in the formation of mature lipoproteins. This chain is Phosphatidylglycerol--prolipoprotein diacylglyceryl transferase, found in Legionella pneumophila (strain Corby).